A 183-amino-acid chain; its full sequence is dTTP/UTP pyrophosphatase (183 aa).

Asp64 serves as the catalytic Proton acceptor.

Belongs to the Maf family. YhdE subfamily. It depends on a divalent metal cation as a cofactor.

It is found in the cytoplasm. The enzyme catalyses dTTP + H2O = dTMP + diphosphate + H(+). It catalyses the reaction UTP + H2O = UMP + diphosphate + H(+). Its function is as follows. Nucleoside triphosphate pyrophosphatase that hydrolyzes dTTP and UTP. May have a dual role in cell division arrest and in preventing the incorporation of modified nucleotides into cellular nucleic acids. This chain is dTTP/UTP pyrophosphatase, found in Acinetobacter baylyi (strain ATCC 33305 / BD413 / ADP1).